A 360-amino-acid polypeptide reads, in one-letter code: Phospho-N-acetylmuramoyl-pentapeptide-transferase (360 aa).

Over 1–25 (MLVWLAEHLVKYYSGFNVFSYLTFR) the chain is Periplasmic. A helical transmembrane segment spans residues 26-46 (AIVSLLTALFISLWMGPRMIA). Topologically, residues 47–71 (HLQKLSFGQVVRNDGPESHFSKRGT) are cytoplasmic. A helical membrane pass occupies residues 72–92 (PTMGGIMILTAIVISVLLWAY). Position 93 (Pro-93) is a topological domain, periplasmic. The helical transmembrane segment at 94-114 (SNPYVWCVLVVLVGYGVIGFV) threads the bilayer. Over 115–131 (DDYRKVVRKDTKGLIAR) the chain is Cytoplasmic. Residues 132 to 152 (WKYFWMSVIALGVAFALYLAG) traverse the membrane as a helical segment. Over 153-167 (KDTPATQLVVPFFKD) the chain is Periplasmic. A helical transmembrane segment spans residues 168 to 188 (VMPQLGLFYILLAYFVIVGTG). Topologically, residues 189–198 (NAVNLTDGLD) are cytoplasmic. A helical transmembrane segment spans residues 199 to 219 (GLAIMPTVFVAGGFALVAWAT). Residues 220–235 (GNMNFASYLHIPYLRH) are Periplasmic-facing. The helical transmembrane segment at 236–256 (AGELVIVCTAIVGAGLGFLWF) threads the bilayer. Topologically, residues 257–262 (NTYPAQ) are cytoplasmic. A helical transmembrane segment spans residues 263–283 (VFMGDVGSLALGGALGIIAVL). Residues 284-287 (LRQE) lie on the Periplasmic side of the membrane. The helical transmembrane segment at 288–308 (FLLVIMGGVFVVETLSVILQV) threads the bilayer. Residues 309–337 (GSFKLRGQRIFRMAPIHHHYELKGWPEPR) are Cytoplasmic-facing. A helical membrane pass occupies residues 338–358 (VIVRFWIISLMLVLIGLATLK). The Periplasmic segment spans residues 359–360 (VR).

Belongs to the glycosyltransferase 4 family. MraY subfamily. Mg(2+) serves as cofactor.

The protein resides in the cell inner membrane. The enzyme catalyses UDP-N-acetyl-alpha-D-muramoyl-L-alanyl-gamma-D-glutamyl-meso-2,6-diaminopimeloyl-D-alanyl-D-alanine + di-trans,octa-cis-undecaprenyl phosphate = di-trans,octa-cis-undecaprenyl diphospho-N-acetyl-alpha-D-muramoyl-L-alanyl-D-glutamyl-meso-2,6-diaminopimeloyl-D-alanyl-D-alanine + UMP. It participates in cell wall biogenesis; peptidoglycan biosynthesis. Functionally, catalyzes the initial step of the lipid cycle reactions in the biosynthesis of the cell wall peptidoglycan: transfers peptidoglycan precursor phospho-MurNAc-pentapeptide from UDP-MurNAc-pentapeptide onto the lipid carrier undecaprenyl phosphate, yielding undecaprenyl-pyrophosphoryl-MurNAc-pentapeptide, known as lipid I. This chain is Phospho-N-acetylmuramoyl-pentapeptide-transferase, found in Shigella boydii serotype 18 (strain CDC 3083-94 / BS512).